Reading from the N-terminus, the 456-residue chain is Septin-10 (456 aa).

Positions 40–306 constitute a Septin-type G domain; sequence QGFCFNILCV…ELYRRCKLQE (267 aa). Positions 50-57 are G1 motif; that stretch reads GETGIGKS. Residues 50-57, glycine 105, 186-194, glycine 240, and arginine 255 contribute to the GTP site; these read GETGIGKS and KADTISKSE. The segment at 102–105 is G3 motif; the sequence is NTVG. The segment at 185–188 is G4 motif; that stretch reads AKAD. A Phosphoserine modification is found at serine 418.

This sequence belongs to the TRAFAC class TrmE-Era-EngA-EngB-Septin-like GTPase superfamily. Septin GTPase family. Septins polymerize into heterooligomeric protein complexes that form filaments, and can associate with cellular membranes, actin filaments and microtubules. GTPase activity is required for filament formation. Interacts with ADGB. In terms of processing, proteolytically cleaved in vitro in a calmodulin-dependent manner.

Its subcellular location is the cytoplasm. The protein resides in the cytoskeleton. It is found in the cell projection. The protein localises to the cilium. It localises to the flagellum. Filament-forming cytoskeletal GTPase. May play a role in cytokinesis (Potential). The polypeptide is Septin-10 (Rattus norvegicus (Rat)).